A 411-amino-acid chain; its full sequence is Serine hydroxymethyltransferase (411 aa).

Residue 120–122 (GHL) coordinates (6S)-5,6,7,8-tetrahydrofolate. Lys225 carries the N6-(pyridoxal phosphate)lysine modification. (6S)-5,6,7,8-tetrahydrofolate-binding positions include Glu241 and 350–352 (SPF).

The protein belongs to the SHMT family. In terms of assembly, homodimer. It depends on pyridoxal 5'-phosphate as a cofactor.

The protein localises to the cytoplasm. It catalyses the reaction (6R)-5,10-methylene-5,6,7,8-tetrahydrofolate + glycine + H2O = (6S)-5,6,7,8-tetrahydrofolate + L-serine. Its pathway is one-carbon metabolism; tetrahydrofolate interconversion. The protein operates within amino-acid biosynthesis; glycine biosynthesis; glycine from L-serine: step 1/1. Functionally, catalyzes the reversible interconversion of serine and glycine with tetrahydrofolate (THF) serving as the one-carbon carrier. This reaction serves as the major source of one-carbon groups required for the biosynthesis of purines, thymidylate, methionine, and other important biomolecules. Also exhibits THF-independent aldolase activity toward beta-hydroxyamino acids, producing glycine and aldehydes, via a retro-aldol mechanism. This Limosilactobacillus fermentum (strain NBRC 3956 / LMG 18251) (Lactobacillus fermentum) protein is Serine hydroxymethyltransferase.